The sequence spans 21 residues: Glutathione S-transferase 1 (21 aa).

It belongs to the GST superfamily. Phi family.

The enzyme catalyses RX + glutathione = an S-substituted glutathione + a halide anion + H(+). Functionally, conjugation of reduced glutathione to a wide number of exogenous and endogenous hydrophobic electrophiles. In plants, may have a detoxification role against certain herbicides. The chain is Glutathione S-transferase 1 from Populus euphratica (Euphrates poplar).